Consider the following 213-residue polypeptide: Pyridoxine/pyridoxamine 5'-phosphate oxidase (213 aa).

Residues 9 to 12 (RLEY) and Lys67 contribute to the substrate site. FMN is bound by residues 62 to 67 (RIVLLK), 77 to 78 (YT), Arg83, Lys84, and Gln106. Substrate is bound by residues Tyr124, Arg128, and Ser132. FMN-binding positions include 141 to 142 (QS) and Trp185. A substrate-binding site is contributed by 191–193 (RLH). Arg195 serves as a coordination point for FMN.

It belongs to the pyridoxamine 5'-phosphate oxidase family. As to quaternary structure, homodimer. The cofactor is FMN.

The catalysed reaction is pyridoxamine 5'-phosphate + O2 + H2O = pyridoxal 5'-phosphate + H2O2 + NH4(+). It catalyses the reaction pyridoxine 5'-phosphate + O2 = pyridoxal 5'-phosphate + H2O2. It functions in the pathway cofactor metabolism; pyridoxal 5'-phosphate salvage; pyridoxal 5'-phosphate from pyridoxamine 5'-phosphate: step 1/1. Its pathway is cofactor metabolism; pyridoxal 5'-phosphate salvage; pyridoxal 5'-phosphate from pyridoxine 5'-phosphate: step 1/1. Functionally, catalyzes the oxidation of either pyridoxine 5'-phosphate (PNP) or pyridoxamine 5'-phosphate (PMP) into pyridoxal 5'-phosphate (PLP). This chain is Pyridoxine/pyridoxamine 5'-phosphate oxidase, found in Chromobacterium violaceum (strain ATCC 12472 / DSM 30191 / JCM 1249 / CCUG 213 / NBRC 12614 / NCIMB 9131 / NCTC 9757 / MK).